The primary structure comprises 401 residues: Tetracycline resistance protein, class B (401 aa).

Over 1–6 (MNSSTK) the chain is Cytoplasmic. A helical membrane pass occupies residues 7–30 (IALVITLLDAMGIGLIMPVLPTLL). Over 31 to 42 (REFIASEDIANH) the chain is Periplasmic. A helical transmembrane segment spans residues 43-61 (FGVLLALYALMQVIFAPWL). At 62–71 (GKMSDRFGRR) the chain is on the cytoplasmic side. The chain crosses the membrane as a helical span at residues 72–91 (PVLLLSLIGASLDYLLLAFS). At 92–98 (SALWMLY) the chain is on the periplasmic side. Residues 99 to 119 (LGRLLSGITGATGAVAASVIA) form a helical membrane-spanning segment. Topologically, residues 120–129 (DTTSASQRVK) are cytoplasmic. The helical transmembrane segment at 130–152 (WFGWLGASFGLGLIAGPIIGGFA) threads the bilayer. Residues 153-158 (GEISPH) lie on the Periplasmic side of the membrane. The helical transmembrane segment at 159-178 (SPFFIAALLNIVTFLVVMFW) threads the bilayer. Topologically, residues 179 to 211 (FRETKNTRDNTDTEVGVETQSNSVYITLFKTMP) are cytoplasmic. The chain crosses the membrane as a helical span at residues 212 to 232 (ILLIIYFSAQLIGQIPATVWV). Residues 233–243 (LFTENRFGWNS) lie on the Periplasmic side of the membrane. Residues 244 to 265 (MMVGFSLAGLGLLHSVFQAFVA) form a helical membrane-spanning segment. The Cytoplasmic segment spans residues 266 to 275 (GRIATKWGEK). The helical transmembrane segment at 276-295 (TAVLLGFIADSSAFAFLAFI) threads the bilayer. The Periplasmic portion of the chain corresponds to 296 to 298 (SEG). Residues 299–322 (WLVFPVLILLAGGGIALPALQGVM) traverse the membrane as a helical segment. The Cytoplasmic segment spans residues 323–332 (SIQTKSHQQG). A helical transmembrane segment spans residues 333–356 (ALQGLLVSLTNATGVIGPLLFAVI). Residues 357–365 (YNHSLPIWD) lie on the Periplasmic side of the membrane. Residues 366–387 (GWIWIIGLAFYCIIILLSMTFM) form a helical membrane-spanning segment. Topologically, residues 388 to 401 (LTPQAQGSKQETSA) are cytoplasmic.

The protein belongs to the major facilitator superfamily. TCR/Tet family.

The protein localises to the cell inner membrane. Resistance to tetracycline by an active tetracycline efflux. This is an energy-dependent process that decreases the accumulation of the antibiotic in whole cells. This protein functions as a metal-tetracycline/H(+) antiporter. This Escherichia coli protein is Tetracycline resistance protein, class B (tetA).